Consider the following 391-residue polypeptide: Multidrug resistance protein MdtL (391 aa).

12 consecutive transmembrane segments (helical) span residues 4–24, 42–62, 69–89, 93–113, 134–154, 158–178, 203–222, 245–265, 269–289, 293–313, 331–351, and 356–376; these read FLICSFALVLLYPAGIDMYLV, IAFSVYLAGMAAAMLFAGKVA, PVAIPGAALFIIASVFCSLAE, LFLAGRFLQGLGAGCCYVVAF, GITCIIPVLAPVLGHLIMLNF, SLFWTMAIMGVAVLMLSLFIL, FFLSRVVITTLSVSVILTFV, ALTAGVSMTVSFSTPFALGIF, TLMITSQVLFLAAGITLAVSP, VSLFGITLICAGFSVGFGVAM, LGIAQVCGSSLWIWLAAVVGI, and MLIGILIACSIVSLLLIMFVA.

The protein belongs to the major facilitator superfamily. DHA1 family. MdtL (TC 2.A.1.2.22) subfamily.

It localises to the cell inner membrane. Functionally, confers resistance to chloramphenicol. The protein is Multidrug resistance protein MdtL of Escherichia coli O81 (strain ED1a).